The sequence spans 157 residues: MRIIGIDPGLARVGYGIIEIENERKILLDCGVIETGKDKKEEDRLYEIFQDLNELINHWKPTVAAVEKFFFYRSSTTISVVQARGVIMMVLASKKIHVSEYSPAKIKLTIAGSGKASKKDILDAVMYNLDLDKPPKPDDSADALAIALTKLNEDGFN.

Catalysis depends on residues aspartate 7, glutamate 67, and aspartate 139. Mg(2+)-binding residues include aspartate 7, glutamate 67, and aspartate 139.

It belongs to the RuvC family. Homodimer which binds Holliday junction (HJ) DNA. The HJ becomes 2-fold symmetrical on binding to RuvC with unstacked arms; it has a different conformation from HJ DNA in complex with RuvA. In the full resolvosome a probable DNA-RuvA(4)-RuvB(12)-RuvC(2) complex forms which resolves the HJ. It depends on Mg(2+) as a cofactor.

Its subcellular location is the cytoplasm. It catalyses the reaction Endonucleolytic cleavage at a junction such as a reciprocal single-stranded crossover between two homologous DNA duplexes (Holliday junction).. Its function is as follows. The RuvA-RuvB-RuvC complex processes Holliday junction (HJ) DNA during genetic recombination and DNA repair. Endonuclease that resolves HJ intermediates. Cleaves cruciform DNA by making single-stranded nicks across the HJ at symmetrical positions within the homologous arms, yielding a 5'-phosphate and a 3'-hydroxyl group; requires a central core of homology in the junction. The consensus cleavage sequence is 5'-(A/T)TT(C/G)-3'. Cleavage occurs on the 3'-side of the TT dinucleotide at the point of strand exchange. HJ branch migration catalyzed by RuvA-RuvB allows RuvC to scan DNA until it finds its consensus sequence, where it cleaves and resolves the cruciform DNA. The polypeptide is Crossover junction endodeoxyribonuclease RuvC (Prochlorococcus marinus (strain AS9601)).